Here is a 696-residue protein sequence, read N- to C-terminus: Methionine synthase reductase (696 aa).

Residues 4 to 147 (FLLLYATQRG…VVEPWIDGLW (144 aa)) enclose the Flavodoxin-like domain. FMN is bound by residues 10 to 14 (TQRGQ) and 93 to 124 (LLGL…QRFY). The tract at residues 166 to 245 (TLSRASDAPL…SSLSIPAVPP (80 aa)) is hinge. Serine 171 and serine 188 each carry phosphoserine. An FAD-binding FR-type domain is found at 269–531 (DPSFQVPISK…PRATNAFHLP (263 aa)). Lysine 289 contacts NADP(+). Residues 449–452 (RPYS) and 485–488 (GVCT) each bind FAD. NADP(+) contacts are provided by residues 608 to 609 (SR), 622 to 624 (YVQ), and aspartate 657. Tryptophan 695 lines the FAD pocket.

In terms of assembly, forms a multiprotein complex with MMACHC, MMADHC and MTR. It depends on FAD as a cofactor. FMN serves as cofactor.

Its subcellular location is the cytoplasm. It catalyses the reaction 2 methylcob(III)alamin-[methionine synthase] + 2 S-adenosyl-L-homocysteine + NADP(+) + H(+) = 2 cob(II)alamin-[methionine synthase] + 2 S-adenosyl-L-methionine + NADPH. The enzyme catalyses 2 cob(II)alamin + A + 2 H2O + 2 H(+) = 2 aquacob(III)alamin + AH2. Functionally, key enzyme in methionine and folate homeostasis responsible for the reactivation of methionine synthase (MTR/MS) activity by catalyzing the reductive methylation of MTR-bound cob(II)alamin. Cobalamin (vitamin B12) forms a complex with MTR to serve as an intermediary in methyl transfer reactions that cycles between MTR-bound methylcob(III)alamin and MTR bound-cob(I)alamin forms, and occasional oxidative escape of the cob(I)alamin intermediate during the catalytic cycle leads to the inactive cob(II)alamin species. The processing of cobalamin in the cytosol occurs in a multiprotein complex composed of at least MMACHC, MMADHC, MTRR and MTR which may contribute to shuttle safely and efficiently cobalamin towards MTR in order to produce methionine. Also necessary for the utilization of methyl groups from the folate cycle, thereby affecting transgenerational epigenetic inheritance. Also acts as a molecular chaperone for methionine synthase by stabilizing apoMTR and incorporating methylcob(III)alamin into apoMTR to form the holoenzyme. Also serves as an aquacob(III)alamin reductase by reducing aquacob(III)alamin to cob(II)alamin; this reduction leads to stimulation of the conversion of apoMTR and aquacob(III)alamin to MTR holoenzyme. The protein is Methionine synthase reductase of Mus musculus (Mouse).